The chain runs to 205 residues: RNA pyrophosphohydrolase (205 aa).

The Nudix hydrolase domain maps to 6–149 (GFRPNVGIVL…KRGVYARALR (144 aa)). Positions 38 to 59 (GGMNTDETPVEAMYRELREETG) match the Nudix box motif. The interval 178-205 (GSSAAGHDRPRKRPRKRGGVLPVRINND) is disordered. The segment covering 186–195 (RPRKRPRKRG) has biased composition (basic residues).

Belongs to the Nudix hydrolase family. RppH subfamily. Requires a divalent metal cation as cofactor.

Functionally, accelerates the degradation of transcripts by removing pyrophosphate from the 5'-end of triphosphorylated RNA, leading to a more labile monophosphorylated state that can stimulate subsequent ribonuclease cleavage. This is RNA pyrophosphohydrolase from Xanthomonas campestris pv. campestris (strain 8004).